The sequence spans 258 residues: Global transcriptional regulator CodY (258 aa).

Positions 1 to 156 (MSSLLSKTRR…SATIVGMEML (156 aa)) are GAF domain. A DNA-binding region (H-T-H motif) is located at residues 204–223 (ASKIADKVGITRSVIVNALR).

Belongs to the CodY family.

It is found in the cytoplasm. In terms of biological role, DNA-binding global transcriptional regulator which is involved in the adaptive response to starvation and acts by directly or indirectly controlling the expression of numerous genes in response to nutrient availability. During rapid exponential growth, CodY is highly active and represses genes whose products allow adaptation to nutrient depletion. The polypeptide is Global transcriptional regulator CodY (Clostridium botulinum (strain Alaska E43 / Type E3)).